The primary structure comprises 1478 residues: ATP-binding cassette transporter abc2 (1478 aa).

Residues 1–25 (MVLEQDLDPFVGGNWMNSAYKGFTF) lie on the Vacuolar side of the membrane. The chain crosses the membrane as a helical span at residues 26–46 (LSATWLAPNIYLLISGCLQYF). At 47 to 65 (YEVRKRSHYFHFRRFWTIW) the chain is on the cytoplasmic side. The chain crosses the membrane as a helical span at residues 66 to 85 (LKSLVIMVLLFTHIYDCYKT). The N-linked (GlcNAc...) asparagine glycan is linked to N86. Over 86–90 (NESVW) the chain is Vacuolar. The helical transmembrane segment at 91 to 104 (NVLSIITYFLALFL) threads the bilayer. Residues 105–116 (HVVEQPTLRIPM) lie on the Cytoplasmic side of the membrane. A helical transmembrane segment spans residues 117 to 137 (ASLLMFWLFKFLASALVLLLR). The Vacuolar segment spans residues 138–154 (PNYTMFPMLNVVPSITF). N-linked (GlcNAc...) asparagine glycosylation occurs at N139. Residues 155 to 175 (FCSLVCLLAEIYVPPANRVWY) form a helical membrane-spanning segment. Residues 176-259 (PDDAAELEET…KKSSLYMWGV (84 aa)) lie on the Cytoplasmic side of the membrane. Residues 260–280 (LFLNHWKLTVVIIVLKLVQDV) traverse the membrane as a helical segment. The 290-residue stretch at 268–557 (TVVIIVLKLV…LPIVVSSVLE (290 aa)) folds into the ABC transmembrane type-1 1 domain. At 281-310 (VAFIQPNLIRKIVIFVSSYSSEHPQPPQVG) the chain is on the vacuolar side. Residues 311-331 (FSLAIAMFLTNVVQTALLQQY) form a helical membrane-spanning segment. At 332-387 (FQLGMVLGMRWRSELITAIYRKSLRLSSAARQSRSVGDIVNYMSVDTQKVCDLTMF) the chain is on the cytoplasmic side. Residues 388–408 (LFVIVSGPFQIVLALTNLYHL) traverse the membrane as a helical segment. Residues 409–411 (VGY) are Vacuolar-facing. A helical transmembrane segment spans residues 412-432 (GALSGAFVTFLLFPCNVVIAS). Over 433–495 (IFKRFQNRQM…MLKKIGIVNT (63 aa)) the chain is Cytoplasmic. A helical transmembrane segment spans residues 496–516 (IGNFTWLFAPILVSAATFGTF). The Vacuolar segment spans residues 517–539 (IVLYGKTRVLSVDIVFACLSLFN). A helical transmembrane segment spans residues 540 to 560 (LLQFPLTMLPIVVSSVLEASV). Residues 561 to 910 (AISRIYGFLT…VKWKVYWTYF (350 aa)) are Cytoplasmic-facing. Residues 593 to 821 (LEIKKGTFSW…PDSQLFQLLS (229 aa)) enclose the ABC transporter 1 domain. Position 631–638 (631–638 (GKVGMGKS)) interacts with ATP. The tract at residues 828-867 (TASSTGADTPLSRSQSVITSSTDVTSSASRSSDTVSNYPK) is disordered. A compositionally biased stretch (polar residues) spans 829-840 (ASSTGADTPLSR). 3 positions are modified to phosphoserine: S839, S843, and S863. Over residues 841 to 863 (SQSVITSSTDVTSSASRSSDTVS) the composition is skewed to low complexity. The chain crosses the membrane as a helical span at residues 911-931 (KACSLFLIFLYFLFIIGGIGM). The region spanning 918–1202 (IFLYFLFIIG…VVRQSVDVET (285 aa)) is the ABC transmembrane type-1 2 domain. The Vacuolar portion of the chain corresponds to 932 to 968 (NVGTNVWLKHWSEVNTQLGYNPKPYFYLGIYTLFGLL). Residues 969–990 (SCALISLSSLTITVFCAIKSCR) form a helical membrane-spanning segment. The Cytoplasmic segment spans residues 991–1033 (YLHDSMVKAVLRAPMSFFETTPTGRILNRFSSDVYRVDEVISR). The chain crosses the membrane as a helical span at residues 1034 to 1054 (VFMFFFRNLFQIVFVLAVICY). Residue S1055 is a topological domain, vacuolar. The chain crosses the membrane as a helical span at residues 1056-1076 (SPMFMILIVPLFFLYRYNQVY). The Cytoplasmic segment spans residues 1077 to 1147 (YTQTSRELKR…SSNRWQAIRV (71 aa)). Residues 1148 to 1168 (EAIGALVVFSSAFFGVLSAVR) traverse the membrane as a helical segment. Residues 1169-1172 (GNPN) are Vacuolar-facing. The chain crosses the membrane as a helical span at residues 1173-1193 (SGLVGLSLSYAVQITQSLTFV). Residues 1194 to 1478 (VRQSVDVETN…YSLAKESGLI (285 aa)) are Cytoplasmic-facing. The 235-residue stretch at 1239-1473 (IKFDHYSVRY…KASLFYSLAK (235 aa)) folds into the ABC transporter 2 domain. Residue 1273 to 1280 (GRTGAGKS) coordinates ATP.

This sequence belongs to the ABC transporter superfamily. ABCC family. Conjugate transporter (TC 3.A.1.208) subfamily.

It localises to the vacuole membrane. Involved in vacuolar sequestration of glutathione S-conjugates. Together with abc4, required for accumulation of a red pigment (ade pigment) in the vacuole of a mutant affected in the adenine biosynthetic pathway. The sequence is that of ATP-binding cassette transporter abc2 (abc2) from Schizosaccharomyces pombe (strain 972 / ATCC 24843) (Fission yeast).